The chain runs to 797 residues: Xaa-Pro dipeptidyl-peptidase (797 aa).

Catalysis depends on charge relay system residues Ser370, Asp490, and His521.

This sequence belongs to the peptidase S15 family. In terms of assembly, homodimer.

The protein resides in the cytoplasm. The enzyme catalyses Hydrolyzes Xaa-Pro-|- bonds to release unblocked, N-terminal dipeptides from substrates including Ala-Pro-|-p-nitroanilide and (sequentially) Tyr-Pro-|-Phe-Pro-|-Gly-Pro-|-Ile.. In terms of biological role, removes N-terminal dipeptides sequentially from polypeptides having unsubstituted N-termini provided that the penultimate residue is proline. The chain is Xaa-Pro dipeptidyl-peptidase from Lacticaseibacillus rhamnosus (Lactobacillus rhamnosus).